Consider the following 273-residue polypeptide: MHDANIRVAIAGAGGRMGRQLIQAALGLEGVQLGAALEREGSSLLGSDAGELAGAGKTGVTVQSSLDAVKDDFDVFIDFTRPEGTLNHLAFCRQHGKGMVIGTTGFDDAGKQAIGEAAKDIAIVFAANFSVGVNVMLKLLEKAAKVMGDYTDIEIIEAHHRHKVDAPSGTALAMGEAIAHALDKDLKDCAVYSREGHTGERVPGTIGFATVRAGDIVGEHTAMFADIGERLEITHKASSRMTFANGAVRSALWLKGKDKGLFDMKDVLNLNYL.

Residues 12–17 (GAGGRM) and Glu-38 contribute to the NAD(+) site. Arg-39 serves as a coordination point for NADP(+). NAD(+)-binding positions include 102-104 (GTT) and 126-129 (AANF). His-159 functions as the Proton donor/acceptor in the catalytic mechanism. His-160 contributes to the (S)-2,3,4,5-tetrahydrodipicolinate binding site. Residue Lys-163 is the Proton donor of the active site. (S)-2,3,4,5-tetrahydrodipicolinate is bound at residue 169 to 170 (GT).

It belongs to the DapB family. In terms of assembly, homotetramer.

The protein localises to the cytoplasm. It carries out the reaction (S)-2,3,4,5-tetrahydrodipicolinate + NAD(+) + H2O = (2S,4S)-4-hydroxy-2,3,4,5-tetrahydrodipicolinate + NADH + H(+). The enzyme catalyses (S)-2,3,4,5-tetrahydrodipicolinate + NADP(+) + H2O = (2S,4S)-4-hydroxy-2,3,4,5-tetrahydrodipicolinate + NADPH + H(+). It functions in the pathway amino-acid biosynthesis; L-lysine biosynthesis via DAP pathway; (S)-tetrahydrodipicolinate from L-aspartate: step 4/4. Catalyzes the conversion of 4-hydroxy-tetrahydrodipicolinate (HTPA) to tetrahydrodipicolinate. The protein is 4-hydroxy-tetrahydrodipicolinate reductase of Escherichia fergusonii (strain ATCC 35469 / DSM 13698 / CCUG 18766 / IAM 14443 / JCM 21226 / LMG 7866 / NBRC 102419 / NCTC 12128 / CDC 0568-73).